Consider the following 175-residue polypeptide: Disulfide bond formation protein B (175 aa).

Over methionine 1–alanine 13 the chain is Cytoplasmic. Residues tryptophan 14 to tyrosine 30 form a helical membrane-spanning segment. The Periplasmic portion of the chain corresponds to phenylalanine 31–valine 48. Cysteines 40 and 43 form a disulfide. The helical transmembrane segment at alanine 49–proline 64 threads the bilayer. Residues arginine 65–phenylalanine 71 lie on the Cytoplasmic side of the membrane. Residues leucine 72–phenylalanine 89 form a helical membrane-spanning segment. Residues glutamate 90 to glutamine 144 lie on the Periplasmic side of the membrane. A disulfide bond links cysteine 104 and cysteine 130. A helical membrane pass occupies residues tryptophan 145 to proline 163. The Cytoplasmic segment spans residues glycine 164–serine 175.

It belongs to the DsbB family.

The protein localises to the cell inner membrane. Required for disulfide bond formation in some periplasmic proteins. Acts by oxidizing the DsbA protein. In Shewanella denitrificans (strain OS217 / ATCC BAA-1090 / DSM 15013), this protein is Disulfide bond formation protein B.